Consider the following 182-residue polypeptide: Tropomyosin-like protein (182 aa).

Residues 1–68 (FDRYNQILDE…ELEQRRTEQQ (68 aa)) are a coiled coil. Over residues 32–66 (DEETKKIKQEEAEMKKKIEGEASRKKLELEQRRTE) the composition is skewed to basic and acidic residues. 2 disordered regions span residues 32 to 81 (DEET…GSTD) and 140 to 160 (DQPAQAGPEPAAPAQEDDAGL). The span at 140–153 (DQPAQAGPEPAAPA) shows a compositional bias: low complexity.

It localises to the cytoplasm. The protein localises to the cytoskeleton. The sequence is that of Tropomyosin-like protein from Pichia angusta (Yeast).